The primary structure comprises 119 residues: Large ribosomal subunit protein bL20 (119 aa).

Belongs to the bacterial ribosomal protein bL20 family.

Binds directly to 23S ribosomal RNA and is necessary for the in vitro assembly process of the 50S ribosomal subunit. It is not involved in the protein synthesizing functions of that subunit. The protein is Large ribosomal subunit protein bL20 of Ruthia magnifica subsp. Calyptogena magnifica.